The following is a 119-amino-acid chain: Beta-2-microglobulin (119 aa).

The first 20 residues, 1–20 (MARFVVVALLVLLSLSGLEA), serve as a signal peptide directing secretion. The region spanning 25-114 (PKIQVYSRHP…VTFSTPKTVK (90 aa)) is the Ig-like C1-type domain. C45 and C100 are oxidised to a cystine.

It belongs to the beta-2-microglobulin family. In terms of assembly, heterodimer of an alpha chain and a beta chain. Beta-2-microglobulin is the beta-chain of major histocompatibility complex class I molecules.

The protein localises to the secreted. Functionally, component of the class I major histocompatibility complex (MHC). Involved in the presentation of peptide antigens to the immune system. The polypeptide is Beta-2-microglobulin (B2M) (Callimico goeldii (Goeldi's marmoset)).